Consider the following 1304-residue polypeptide: Angiotensin-converting enzyme (1304 aa).

The signal sequence occupies residues 1–27; that stretch reads MGAASGRRGPGLLLPLLLLLPPQPALA. At 28–1257 the chain is on the extracellular side; that stretch reads LDPGLQPGNF…LDAQQARVGQ (1230 aa). N-linked (GlcNAc...) asparagine glycosylation is found at Asn-36, Asn-52, Asn-72, Asn-109, Asn-144, and Asn-158. Peptidase M2 domains follow at residues 38–622 and 641–1220; these read SADE…LGWP and VTDE…LGWP. Cys-155 and Cys-163 are joined by a disulfide. Position 229 (Tyr-229) interacts with chloride. A glycan (N-linked (GlcNAc...) asparagine) is linked at Asn-316. Cys-357 and Cys-375 form a disulfide bridge. His-388 is a Zn(2+) binding site. Glu-389 serves as the catalytic Proton acceptor 1. Residues His-392 and Glu-416 each contribute to the Zn(2+) site. N-linked (GlcNAc...) asparagine glycosylation is found at Asn-440, Asn-443, and Asn-507. The active-site Proton donor 1 is the His-518. Arg-527 contacts chloride. Cysteines 543 and 555 form a disulfide. Asn-675 is a glycosylation site (N-linked (GlcNAc...) asparagine). 2 N-linked (GlcNAc...) (complex) asparagine glycosylation sites follow: Asn-693 and Asn-712. Cysteines 755 and 761 form a disulfide. N-linked (GlcNAc...) asparagine glycosylation is present at Asn-758. Residues Arg-789 and Tyr-827 each coordinate chloride. Residue Asn-940 is glycosylated (N-linked (GlcNAc...) asparagine). A disulfide bridge connects residues Cys-955 and Cys-973. His-986 contacts Zn(2+). Residue Glu-987 is the Proton acceptor 2 of the active site. Residues His-990 and Glu-1014 each coordinate Zn(2+). Residues Trp-1088 and Arg-1092 each contribute to the chloride site. His-1116 (proton donor 2) is an active-site residue. Chloride is bound at residue Arg-1125. A disulfide bridge connects residues Cys-1141 and Cys-1153. Residue Asn-1189 is glycosylated (N-linked (GlcNAc...) asparagine). Residues 1213–1254 are juxtamembrane stalk; the sequence is HGEKLGWPQYNWTPNSARSEGPLPDSGRVSFLGLDLDAQQAR. A helical membrane pass occupies residues 1258-1274; sequence WLLLFLGIALLVATLGL. Over 1275 to 1304 the chain is Cytoplasmic; sequence SQRLFSIRHRSLHRHSHGPQFDSEVELRHS. Residue Ser-1297 is modified to Phosphoserine.

This sequence belongs to the peptidase M2 family. In terms of assembly, monomer and homodimer; homodimerizes following binding to an inhibitor. Interacts with calmodulin (CALM1, CALM2 or CALM3); interaction takes place in the cytoplasmic region and regulates phosphorylation and proteolytic cleavage. The cofactor is Zn(2+). Requires chloride as cofactor. In terms of processing, produced following proteolytic cleavage by secretase enzymes that cleave the transmembrane form in the juxtamembrane stalk region upstream of the transmembrane region. Cleavage can take place at different sites of the juxtamembrane stalk region. Phosphorylated by CK2 on Ser-1297; which allows membrane retention. Phosphorylated on tyrosine residues on its extracellular part, promoting cleavage by secretase enzymes and formation of the soluble form (Angiotensin-converting enzyme, soluble form).

It localises to the cell membrane. The protein localises to the cytoplasm. The protein resides in the secreted. It carries out the reaction Release of a C-terminal dipeptide, oligopeptide-|-Xaa-Yaa, when Xaa is not Pro, and Yaa is neither Asp nor Glu. Thus, conversion of angiotensin I to angiotensin II, with increase in vasoconstrictor activity, but no action on angiotensin II.. The catalysed reaction is angiotensin I + H2O = L-histidyl-L-leucine + angiotensin II. The enzyme catalyses bradykinin + H2O = L-Phe-L-Arg + bradykinin(1-7). It catalyses the reaction substance P + H2O = substance P(1-9) + L-Leu-L-Met-NH2. It carries out the reaction substance P + H2O = substance P(1-8) + Gly-L-Leu-L-Met-NH2. The catalysed reaction is substance P + H2O = L-Phe-L-Phe-Gly-L-Leu-L-Met-NH2 + substance P(1-6). The enzyme catalyses neurotensin + H2O = neurotensin(1-11) + L-isoleucyl-L-leucine. It catalyses the reaction goralatide + H2O = N-acetyl-L-seryl-L-aspartate + L-lysyl-L-proline. It carries out the reaction Met-enkephalin + H2O = L-phenylalanyl-L-methionine + L-tyrosylglycylglycine. The catalysed reaction is Leu-enkephalin + H2O = L-tyrosylglycylglycine + L-phenylalanyl-L-leucine. The enzyme catalyses Met-enkephalin-Arg-Phe + H2O = L-arginyl-L-phenylalanine + Met-enkephalin. The dipeptidyl carboxypeptidase activity is strongly activated by chloride. The dipeptidyl carboxypeptidase activity is specifically inhibited by lisinopril, captopril and enalaprilat. With respect to regulation, strongly inhibited by lisinopril and captopril. Functionally, dipeptidyl carboxypeptidase that removes dipeptides from the C-terminus of a variety of circulating hormones, such as angiotensin I, bradykinin or enkephalins, thereby playing a key role in the regulation of blood pressure, electrolyte homeostasis or synaptic plasticity. Composed of two similar catalytic domains, each possessing a functional active site, with different selectivity for substrates. Plays a major role in the angiotensin-renin system that regulates blood pressure and sodium retention by the kidney by converting angiotensin I to angiotensin II, resulting in an increase of the vasoconstrictor activity of angiotensin. Also able to inactivate bradykinin, a potent vasodilator, and therefore enhance the blood pressure response. Acts as a regulator of synaptic transmission by mediating cleavage of neuropeptide hormones, such as substance P, neurotensin or enkephalins. Catalyzes degradation of different enkephalin neuropeptides (Met-enkephalin, Leu-enkephalin, Met-enkephalin-Arg-Phe and possibly Met-enkephalin-Arg-Gly-Leu). Acts as a regulator of synaptic plasticity in the nucleus accumbens of the brain by mediating cleavage of Met-enkephalin-Arg-Phe, a strong ligand of Mu-type opioid receptor OPRM1, into Met-enkephalin. Met-enkephalin-Arg-Phe cleavage by ACE decreases activation of OPRM1, leading to long-term synaptic potentiation of glutamate release. Also acts as a regulator of hematopoietic stem cell differentiation by mediating degradation of hemoregulatory peptide N-acetyl-SDKP (AcSDKP). Acts as a regulator of cannabinoid signaling pathway by mediating degradation of hemopressin, an antagonist peptide of the cannabinoid receptor CNR1. Involved in amyloid-beta metabolism by catalyzing degradation of Amyloid-beta protein 40 and Amyloid-beta protein 42 peptides, thereby preventing plaque formation. Catalyzes cleavage of cholecystokinin (maturation of Cholecystokinin-8 and Cholecystokinin-5) and Gonadoliberin-1 (both maturation and degradation) hormones. Degradation of hemoregulatory peptide N-acetyl-SDKP (AcSDKP) and amyloid-beta proteins is mediated by the N-terminal catalytic domain, while angiotensin I and cholecystokinin cleavage is mediated by the C-terminal catalytic region. In terms of biological role, soluble form that is released in blood plasma and other body fluids following proteolytic cleavage in the juxtamembrane stalk region. Isoform produced by alternative promoter usage that is specifically expressed in spermatocytes and adult testis, and which is required for male fertility. In contrast to somatic isoforms, only contains one catalytic domain. Acts as a dipeptidyl carboxypeptidase that removes dipeptides from the C-terminus of substrates. The identity of substrates that are needed for male fertility is unknown. May also have a glycosidase activity which releases GPI-anchored proteins from the membrane by cleaving the mannose linkage in the GPI moiety. The GPIase activity was reported to be essential for the egg-binding ability of the sperm. This activity is however unclear and has been challenged by other groups, suggesting that it may be indirect. This Pan troglodytes (Chimpanzee) protein is Angiotensin-converting enzyme.